We begin with the raw amino-acid sequence, 759 residues long: Phosphoribosylformylglycinamidine synthase subunit PurL (759 aa).

Residue His-46 is part of the active site. ATP is bound by residues Tyr-49 and Lys-88. A Mg(2+)-binding site is contributed by Glu-90. Substrate-binding positions include 91-94 and Arg-113; that span reads SHNH. His-92 acts as the Proton acceptor in catalysis. Mg(2+) is bound at residue Asp-114. Residue Gln-237 coordinates substrate. Asp-265 is a binding site for Mg(2+). 309-311 lines the substrate pocket; that stretch reads ESQ. ATP-binding residues include Asp-498 and Gly-535. Asn-536 contributes to the Mg(2+) binding site. Substrate is bound at residue Ser-538.

It belongs to the FGAMS family. As to quaternary structure, monomer. Part of the FGAM synthase complex composed of 1 PurL, 1 PurQ and 2 PurS subunits.

The protein localises to the cytoplasm. It carries out the reaction N(2)-formyl-N(1)-(5-phospho-beta-D-ribosyl)glycinamide + L-glutamine + ATP + H2O = 2-formamido-N(1)-(5-O-phospho-beta-D-ribosyl)acetamidine + L-glutamate + ADP + phosphate + H(+). The protein operates within purine metabolism; IMP biosynthesis via de novo pathway; 5-amino-1-(5-phospho-D-ribosyl)imidazole from N(2)-formyl-N(1)-(5-phospho-D-ribosyl)glycinamide: step 1/2. Its function is as follows. Part of the phosphoribosylformylglycinamidine synthase complex involved in the purines biosynthetic pathway. Catalyzes the ATP-dependent conversion of formylglycinamide ribonucleotide (FGAR) and glutamine to yield formylglycinamidine ribonucleotide (FGAM) and glutamate. The FGAM synthase complex is composed of three subunits. PurQ produces an ammonia molecule by converting glutamine to glutamate. PurL transfers the ammonia molecule to FGAR to form FGAM in an ATP-dependent manner. PurS interacts with PurQ and PurL and is thought to assist in the transfer of the ammonia molecule from PurQ to PurL. The protein is Phosphoribosylformylglycinamidine synthase subunit PurL of Anaeromyxobacter sp. (strain K).